A 162-amino-acid chain; its full sequence is 2-C-methyl-D-erythritol 2,4-cyclodiphosphate synthase (162 aa).

Aspartate 10 and histidine 12 together coordinate a divalent metal cation. 4-CDP-2-C-methyl-D-erythritol 2-phosphate-binding positions include 10 to 12 (DVH) and 36 to 37 (HS). Position 44 (histidine 44) interacts with a divalent metal cation. 4-CDP-2-C-methyl-D-erythritol 2-phosphate contacts are provided by residues 58–60 (DIG), 63–67 (FSDTD), and arginine 144.

It belongs to the IspF family. As to quaternary structure, homotrimer. It depends on a divalent metal cation as a cofactor.

The catalysed reaction is 4-CDP-2-C-methyl-D-erythritol 2-phosphate = 2-C-methyl-D-erythritol 2,4-cyclic diphosphate + CMP. It participates in isoprenoid biosynthesis; isopentenyl diphosphate biosynthesis via DXP pathway; isopentenyl diphosphate from 1-deoxy-D-xylulose 5-phosphate: step 4/6. In terms of biological role, involved in the biosynthesis of isopentenyl diphosphate (IPP) and dimethylallyl diphosphate (DMAPP), two major building blocks of isoprenoid compounds. Catalyzes the conversion of 4-diphosphocytidyl-2-C-methyl-D-erythritol 2-phosphate (CDP-ME2P) to 2-C-methyl-D-erythritol 2,4-cyclodiphosphate (ME-CPP) with a corresponding release of cytidine 5-monophosphate (CMP). The polypeptide is 2-C-methyl-D-erythritol 2,4-cyclodiphosphate synthase (Burkholderia mallei (strain NCTC 10247)).